Reading from the N-terminus, the 76-residue chain is Protein RALF-like 26 (76 aa).

The signal sequence occupies residues 1–22 (MKAWMIILLVICVAVVVEQSEA). Residues Cys-37 and Cys-46 are joined by a disulfide bond. The N-linked (GlcNAc...) asparagine glycan is linked to Asn-61. Residues Cys-66 and Cys-72 are joined by a disulfide bond.

Belongs to the plant rapid alkalinization factor (RALF) family.

It localises to the secreted. In terms of biological role, cell signaling peptide that may regulate plant stress, growth, and development. Mediates a rapid alkalinization of extracellular space by mediating a transient increase in the cytoplasmic Ca(2+) concentration leading to a calcium-dependent signaling events through a cell surface receptor and a concomitant activation of some intracellular mitogen-activated protein kinases. The chain is Protein RALF-like 26 (RALFL26) from Arabidopsis thaliana (Mouse-ear cress).